Reading from the N-terminus, the 463-residue chain is Ribosomal protein uS12 methylthiotransferase RimO (463 aa).

Residues 1–26 (MPAMSQNPPLLRPDLAPAPIFDTSRR) are disordered. The segment covering 8-19 (PPLLRPDLAPAP) has biased composition (low complexity). One can recognise an MTTase N-terminal domain in the interval 30–140 (PTIGMVSLGC…VLDAVHHAVP (111 aa)). [4Fe-4S] cluster contacts are provided by Cys-39, Cys-75, Cys-104, Cys-171, Cys-175, and Cys-178. A Radical SAM core domain is found at 157-395 (LTPRHYSYLK…MQKAQAISEA (239 aa)). The TRAM domain occupies 398 to 463 (AAKVGHRIEV…AGEYDLWGRL (66 aa)).

It belongs to the methylthiotransferase family. RimO subfamily. [4Fe-4S] cluster serves as cofactor.

It localises to the cytoplasm. The catalysed reaction is L-aspartate(89)-[ribosomal protein uS12]-hydrogen + (sulfur carrier)-SH + AH2 + 2 S-adenosyl-L-methionine = 3-methylsulfanyl-L-aspartate(89)-[ribosomal protein uS12]-hydrogen + (sulfur carrier)-H + 5'-deoxyadenosine + L-methionine + A + S-adenosyl-L-homocysteine + 2 H(+). Functionally, catalyzes the methylthiolation of an aspartic acid residue of ribosomal protein uS12. The protein is Ribosomal protein uS12 methylthiotransferase RimO of Paracoccus denitrificans (strain Pd 1222).